The chain runs to 120 residues: Aspartate 1-decarboxylase (120 aa).

Catalysis depends on Ser25, which acts as the Schiff-base intermediate with substrate; via pyruvic acid. Residue Ser25 is modified to Pyruvic acid (Ser). Thr57 lines the substrate pocket. Catalysis depends on Tyr58, which acts as the Proton donor. A substrate-binding site is contributed by 73–75 (GAA).

The protein belongs to the PanD family. In terms of assembly, heterooctamer of four alpha and four beta subunits. Requires pyruvate as cofactor. Post-translationally, is synthesized initially as an inactive proenzyme, which is activated by self-cleavage at a specific serine bond to produce a beta-subunit with a hydroxyl group at its C-terminus and an alpha-subunit with a pyruvoyl group at its N-terminus.

The protein localises to the cytoplasm. The catalysed reaction is L-aspartate + H(+) = beta-alanine + CO2. The protein operates within cofactor biosynthesis; (R)-pantothenate biosynthesis; beta-alanine from L-aspartate: step 1/1. Catalyzes the pyruvoyl-dependent decarboxylation of aspartate to produce beta-alanine. This is Aspartate 1-decarboxylase from Deinococcus deserti (strain DSM 17065 / CIP 109153 / LMG 22923 / VCD115).